A 691-amino-acid polypeptide reads, in one-letter code: Elongation factor G (691 aa).

The region spanning 8 to 283 (EDYRNFGIMA…AVVDFLPNPT (276 aa)) is the tr-type G domain. Residues 17-24 (AHIDAGKT), 81-85 (DTPGH), and 135-138 (NKMD) contribute to the GTP site.

Belongs to the TRAFAC class translation factor GTPase superfamily. Classic translation factor GTPase family. EF-G/EF-2 subfamily.

It is found in the cytoplasm. Functionally, catalyzes the GTP-dependent ribosomal translocation step during translation elongation. During this step, the ribosome changes from the pre-translocational (PRE) to the post-translocational (POST) state as the newly formed A-site-bound peptidyl-tRNA and P-site-bound deacylated tRNA move to the P and E sites, respectively. Catalyzes the coordinated movement of the two tRNA molecules, the mRNA and conformational changes in the ribosome. The sequence is that of Elongation factor G from Maricaulis maris (strain MCS10) (Caulobacter maris).